Here is a 450-residue protein sequence, read N- to C-terminus: L-lysine-epsilon aminotransferase (450 aa).

Pyridoxal 5'-phosphate contacts are provided by G127 and A128. 2-oxoglutarate is bound by residues R168 and Q274. Residue R168 participates in L-lysine binding. Q274 provides a ligand contact to pyridoxal 5'-phosphate. K300 bears the N6-(pyridoxal phosphate)lysine mark. Residue R423 coordinates 2-oxoglutarate.

Belongs to the class-III pyridoxal-phosphate-dependent aminotransferase family. The cofactor is pyridoxal 5'-phosphate.

The enzyme catalyses L-lysine + 2-oxoglutarate = (S)-2-amino-6-oxohexanoate + L-glutamate. It participates in antibiotic biosynthesis; cephamycin C biosynthesis. In terms of biological role, catalyzes the transfer of the terminal amino group of L-lysine to alpha-ketoglutarate to yield L-glutamate and 2-aminoadipate 6-semialdehyde ((S)-2-amino-6-oxohexanoate), which is spontaneously converted to the dehydrated form 1-piperideine 6-carboxylate. This chain is L-lysine-epsilon aminotransferase, found in Amycolatopsis lactamdurans (Nocardia lactamdurans).